The chain runs to 133 residues: MNHTVQTFFSPVNSGQPPNYEMLKEEHKVAVLGVPHNPAPPTSTVIHIRSKTSVPHHVVWSLFNTLFMNPCCLGFIAFAYSVKSRDRKMVGNVTGAQAYASTTKCLNIWALILGILMTILLIIIPVLIFQAHR.

Residues Met1 to His57 are Extracellular-facing. A Glycyl lysine isopeptide (Lys-Gly) (interchain with G-Cter in ubiquitin) cross-link involves residue Lys24. Residues Val58–Phe78 traverse the membrane as a helical segment. Topologically, residues Ala79–Asn107 are cytoplasmic. Glycyl lysine isopeptide (Lys-Gly) (interchain with G-Cter in ubiquitin) cross-links involve residues Lys83, Lys88, and Lys104. Residues Ile108–Ile128 traverse the membrane as a helical segment. Topologically, residues Phe129–Arg133 are extracellular.

It belongs to the CD225/Dispanin family.

It localises to the membrane. This is Putative dispanin subfamily A member 2d from Homo sapiens (Human).